The following is a 121-amino-acid chain: Large ribosomal subunit protein uL18 (121 aa).

The protein belongs to the universal ribosomal protein uL18 family. As to quaternary structure, part of the 50S ribosomal subunit; part of the 5S rRNA/L5/L18/L25 subcomplex. Contacts the 5S and 23S rRNAs.

This is one of the proteins that bind and probably mediate the attachment of the 5S RNA into the large ribosomal subunit, where it forms part of the central protuberance. In Ehrlichia chaffeensis (strain ATCC CRL-10679 / Arkansas), this protein is Large ribosomal subunit protein uL18.